Consider the following 307-residue polypeptide: Sesquiterpene synthase-like protein Agr10 (307 aa).

The disordered stretch occupies residues 287–307; sequence GRYFGDRGPENQSDIPTSSNR. Over residues 296–307 the composition is skewed to polar residues; the sequence is ENQSDIPTSSNR.

The protein belongs to the terpene synthase family.

The sequence is that of Sesquiterpene synthase-like protein Agr10 from Cyclocybe aegerita (Black poplar mushroom).